The following is a 95-amino-acid chain: CRISPR-associated endoribonuclease Cas2 (95 aa).

Mg(2+) is bound at residue Asp10.

This sequence belongs to the CRISPR-associated endoribonuclease Cas2 protein family. In terms of assembly, homodimer, forms a heterotetramer with a Cas1 homodimer. Requires Mg(2+) as cofactor.

CRISPR (clustered regularly interspaced short palindromic repeat), is an adaptive immune system that provides protection against mobile genetic elements (viruses, transposable elements and conjugative plasmids). CRISPR clusters contain sequences complementary to antecedent mobile elements and target invading nucleic acids. CRISPR clusters are transcribed and processed into CRISPR RNA (crRNA). Functions as a ssRNA-specific endoribonuclease. Involved in the integration of spacer DNA into the CRISPR cassette. This is CRISPR-associated endoribonuclease Cas2 from Geobacter sulfurreducens (strain ATCC 51573 / DSM 12127 / PCA).